We begin with the raw amino-acid sequence, 725 residues long: Non-structural protein 4 (725 aa).

2 disordered regions span residues 1–26 and 666–725; these read MSKGMETVTSLVSGPPNNLKKGGNRN and DEVE…TKDE. A compositionally biased stretch (polar residues) spans 7–16; it reads TVTSLVSGPP. Residues 675–686 show a composition bias toward basic and acidic residues; it reads ENQKQELDAKSD. The span at 687 to 709 shows a compositional bias: acidic residues; that stretch reads DVEESSVEGEEDDDGSSASEETD.

In Rice gall dwarf virus (RGDV), this protein is Non-structural protein 4.